The following is a 141-amino-acid chain: Transmembrane protein 216 (141 aa).

4 helical membrane passes run 15-35 (ILFF…LLIF), 49-69 (LVLD…RLFF), 82-102 (LGIS…YLLL), and 115-135 (SILL…LATF).

As to quaternary structure, part of the tectonic-like complex (also named B9 complex). Interacts with TMEM107.

It is found in the membrane. It localises to the cytoplasm. Its subcellular location is the cytoskeleton. The protein resides in the cilium basal body. In terms of biological role, part of the tectonic-like complex which is required for tissue-specific ciliogenesis and may regulate ciliary membrane composition. The chain is Transmembrane protein 216 (Tmem216) from Rattus norvegicus (Rat).